The primary structure comprises 359 residues: UDP-N-acetylglucosamine--N-acetylmuramyl-(pentapeptide) pyrophosphoryl-undecaprenol N-acetylglucosamine transferase (359 aa).

UDP-N-acetyl-alpha-D-glucosamine is bound by residues 12 to 14, Asn124, Arg163, Ser191, Ile245, 264 to 269, and Gln290; these read TGG and ALTVAE.

It belongs to the glycosyltransferase 28 family. MurG subfamily.

It is found in the cell inner membrane. It catalyses the reaction di-trans,octa-cis-undecaprenyl diphospho-N-acetyl-alpha-D-muramoyl-L-alanyl-D-glutamyl-meso-2,6-diaminopimeloyl-D-alanyl-D-alanine + UDP-N-acetyl-alpha-D-glucosamine = di-trans,octa-cis-undecaprenyl diphospho-[N-acetyl-alpha-D-glucosaminyl-(1-&gt;4)]-N-acetyl-alpha-D-muramoyl-L-alanyl-D-glutamyl-meso-2,6-diaminopimeloyl-D-alanyl-D-alanine + UDP + H(+). It functions in the pathway cell wall biogenesis; peptidoglycan biosynthesis. Functionally, cell wall formation. Catalyzes the transfer of a GlcNAc subunit on undecaprenyl-pyrophosphoryl-MurNAc-pentapeptide (lipid intermediate I) to form undecaprenyl-pyrophosphoryl-MurNAc-(pentapeptide)GlcNAc (lipid intermediate II). This Nitrosococcus oceani (strain ATCC 19707 / BCRC 17464 / JCM 30415 / NCIMB 11848 / C-107) protein is UDP-N-acetylglucosamine--N-acetylmuramyl-(pentapeptide) pyrophosphoryl-undecaprenol N-acetylglucosamine transferase.